The sequence spans 239 residues: Guanylate kinase (239 aa).

Residues glycine 55 to leucine 235 enclose the Guanylate kinase-like domain. An ATP-binding site is contributed by glycine 62–serine 69.

This sequence belongs to the guanylate kinase family.

The protein resides in the cytoplasm. It catalyses the reaction GMP + ATP = GDP + ADP. Essential for recycling GMP and indirectly, cGMP. The sequence is that of Guanylate kinase (gmk) from Mycoplasma pneumoniae (strain ATCC 29342 / M129 / Subtype 1) (Mycoplasmoides pneumoniae).